We begin with the raw amino-acid sequence, 448 residues long: Glutamyl-tRNA reductase 2 (448 aa).

Residues 50–53 (TCER), S109, 114–116 (ESD), and Q120 contribute to the substrate site. C51 acts as the Nucleophile in catalysis. 190-195 (GTGQVA) contributes to the NADP(+) binding site. Residues 423–448 (DQAVPAYSPQPIGNTSNAAASATPRR) form a disordered region. Polar residues predominate over residues 433–442 (PIGNTSNAAA).

It belongs to the glutamyl-tRNA reductase family. Homodimer.

It catalyses the reaction (S)-4-amino-5-oxopentanoate + tRNA(Glu) + NADP(+) = L-glutamyl-tRNA(Glu) + NADPH + H(+). It participates in porphyrin-containing compound metabolism; protoporphyrin-IX biosynthesis; 5-aminolevulinate from L-glutamyl-tRNA(Glu): step 1/2. In terms of biological role, catalyzes the NADPH-dependent reduction of glutamyl-tRNA(Glu) to glutamate 1-semialdehyde (GSA). The polypeptide is Glutamyl-tRNA reductase 2 (Nocardioides sp. (strain ATCC BAA-499 / JS614)).